The sequence spans 179 residues: Adenine phosphoribosyltransferase (179 aa).

The protein belongs to the purine/pyrimidine phosphoribosyltransferase family. In terms of assembly, homodimer.

It localises to the cytoplasm. It carries out the reaction AMP + diphosphate = 5-phospho-alpha-D-ribose 1-diphosphate + adenine. Its pathway is purine metabolism; AMP biosynthesis via salvage pathway; AMP from adenine: step 1/1. Catalyzes a salvage reaction resulting in the formation of AMP, that is energically less costly than de novo synthesis. This Gluconobacter oxydans (strain 621H) (Gluconobacter suboxydans) protein is Adenine phosphoribosyltransferase.